An 82-amino-acid chain; its full sequence is Antitoxin MazE8 (82 aa).

Forms a complex with cognate toxin MazF8.

In terms of biological role, antitoxin component of a type II toxin-antitoxin (TA) system. Its cognate toxin is MazF8. The protein is Antitoxin MazE8 (mazE8) of Mycobacterium tuberculosis (strain ATCC 25618 / H37Rv).